The primary structure comprises 749 residues: Catalase-peroxidase (749 aa).

A compositionally biased stretch (basic and acidic residues) spans 1–12; the sequence is MSSDTSDTRPPH. A disordered region spans residues 1 to 40; sequence MSSDTSDTRPPHSDSGTQSNSESENPIIDSPEPKAHAPLT. The segment covering 14–24 has biased composition (polar residues); sequence DSGTQSNSESE. The segment at residues 113–240 is a cross-link (tryptophyl-tyrosyl-methioninium (Trp-Tyr) (with M-266)); it reads WHAAGTYRIF…FGATTMGLIY (128 aa). H114 serves as the catalytic Proton acceptor. Positions 240-266 form a cross-link, tryptophyl-tyrosyl-methioninium (Tyr-Met) (with W-113); that stretch reads YVNPEGPEGKPDPLAAAHDIRETFGRM. H281 contacts heme b.

This sequence belongs to the peroxidase family. Peroxidase/catalase subfamily. In terms of assembly, homodimer or homotetramer. Heme b is required as a cofactor. Formation of the three residue Trp-Tyr-Met cross-link is important for the catalase, but not the peroxidase activity of the enzyme.

It carries out the reaction H2O2 + AH2 = A + 2 H2O. It catalyses the reaction 2 H2O2 = O2 + 2 H2O. Bifunctional enzyme with both catalase and broad-spectrum peroxidase activity. In Mycobacterium sp. (strain JLS), this protein is Catalase-peroxidase.